A 1382-amino-acid chain; its full sequence is Hepatocyte growth factor receptor (1382 aa).

The signal sequence occupies residues methionine 1–glycine 24. The Extracellular segment spans residues glutamate 25–leucine 935. A Sema domain is found at lysine 27–leucine 516. Asparagine 45 is a glycosylation site (N-linked (GlcNAc...) asparagine). 4 disulfides stabilise this stretch: cysteine 95–cysteine 101, cysteine 98–cysteine 160, cysteine 133–cysteine 141, and cysteine 173–cysteine 176. Asparagine 106 is a glycosylation site (N-linked (GlcNAc...) asparagine). N-linked (GlcNAc...) asparagine glycosylation is found at asparagine 203 and asparagine 359. 2 disulfides stabilise this stretch: cysteine 299–cysteine 364 and cysteine 386–cysteine 398. N-linked (GlcNAc...) asparagine glycans are attached at residues asparagine 400 and asparagine 406. 4 disulfide bridges follow: cysteine 521/cysteine 539, cysteine 527/cysteine 562, cysteine 530/cysteine 546, and cysteine 542/cysteine 552. 3 IPT/TIG domains span residues proline 564–valine 656, proline 658–glutamine 740, and proline 743–valine 837. An O-linked (Man) threonine glycan is attached at threonine 583. N-linked (GlcNAc...) asparagine glycosylation is found at asparagine 608 and asparagine 636. Threonine 677 and threonine 762 each carry an O-linked (Man) threonine glycan. Asparagine 786, asparagine 880, and asparagine 931 each carry an N-linked (GlcNAc...) asparagine glycan. A helical transmembrane segment spans residues isoleucine 936–leucine 956. The Cytoplasmic segment spans residues lysine 957–glutamate 1379. Phosphoserine is present on serine 967. Threonine 978 carries the post-translational modification Phosphothreonine. Phosphoserine is present on residues serine 991, serine 998, and serine 1001. The residue at position 1004 (tyrosine 1004) is a Phosphotyrosine. Residues valine 1079–isoleucine 1346 enclose the Protein kinase domain. ATP contacts are provided by residues isoleucine 1085 to valine 1093 and lysine 1111. Aspartate 1205 acts as the Proton acceptor in catalysis. The interaction with RANBP9 stretch occupies residues leucine 1213–threonine 1382. The residue at position 1231 (tyrosine 1231) is a Phosphotyrosine. Tyrosine 1235 and tyrosine 1236 each carry phosphotyrosine; by autocatalysis. Threonine 1290 is subject to Phosphothreonine. An interaction with MUC20 region spans residues tryptophan 1321–valine 1360. Phosphotyrosine; by autocatalysis is present on residues tyrosine 1350 and tyrosine 1357. Tyrosine 1366 carries the post-translational modification Phosphotyrosine.

This sequence belongs to the protein kinase superfamily. Tyr protein kinase family. In terms of assembly, heterodimer made of an alpha chain (50 kDa) and a beta chain (145 kDa) which are disulfide linked. Binds PLXNB1. Interacts when phosphorylated with downstream effectors including STAT3, PIK3R1, SRC, PCLG1, GRB2 and GAB1. Interacts with SPSB1, SPSB2 and SPSB4. Interacts with INPP5D/SHIP1. When phosphorylated at Tyr-1357, interacts with INPPL1/SHIP2. Interacts with RANBP9 and RANBP10, as well as SPSB1, SPSB2, SPSB3 and SPSB4. SPSB1 binding occurs in the presence and in the absence of HGF, however HGF treatment has a positive effect on this interaction. Interacts with MUC20; prevents interaction with GRB2 and suppresses hepatocyte growth factor-induced cell proliferation. Interacts with GRB10. Interacts with PTPN1 and PTPN2. Interacts with HSP90AA1 and HSP90AB1; the interaction suppresses MET kinase activity. Interacts with tensin TNS3. Interacts (when phosphorylated) with tensin TNS4 (via SH2 domain); the interaction increases MET protein stability by inhibiting MET endocytosis and subsequent lysosomal degradation. (Microbial infection) Interacts with L.monocytogenes InlB. InlB probably dimerizes upon binding to MET, which encourages subsequent dimerization of MET. Autophosphorylated in response to ligand binding on Tyr-1235 and Tyr-1236 in the kinase domain leading to further phosphorylation of Tyr-1350 and Tyr-1357 in the C-terminal multifunctional docking site. Dephosphorylated by PTPRJ at Tyr-1350 and Tyr-1366. Dephosphorylated by PTPN1 and PTPN2. In terms of processing, ubiquitinated. Ubiquitination by CBL regulates the receptor stability and activity through proteasomal degradation. Post-translationally, (Microbial infection) Tyrosine phosphorylation is stimulated by L.monocytogenes InlB. O-mannosylation of IPT/TIG domains by TMEM260 is required for protein maturation. O-mannosylated residues are composed of single mannose glycans that are not elongated or modified.

The protein resides in the membrane. It carries out the reaction L-tyrosyl-[protein] + ATP = O-phospho-L-tyrosyl-[protein] + ADP + H(+). With respect to regulation, in its inactive state, the C-terminal tail interacts with the catalytic domain and inhibits the kinase activity. Upon ligand binding, the C-terminal tail is displaced and becomes phosphorylated, thus increasing the kinase activity. In terms of biological role, receptor tyrosine kinase that transduces signals from the extracellular matrix into the cytoplasm by binding to hepatocyte growth factor/HGF ligand. Regulates many physiological processes including proliferation, scattering, morphogenesis and survival. Ligand binding at the cell surface induces autophosphorylation of MET on its intracellular domain that provides docking sites for downstream signaling molecules. Following activation by ligand, interacts with the PI3-kinase subunit PIK3R1, PLCG1, SRC, GRB2, STAT3 or the adapter GAB1. Recruitment of these downstream effectors by MET leads to the activation of several signaling cascades including the RAS-ERK, PI3 kinase-AKT, or PLCgamma-PKC. The RAS-ERK activation is associated with the morphogenetic effects while PI3K/AKT coordinates prosurvival effects. During embryonic development, MET signaling plays a role in gastrulation, development and migration of muscles and neuronal precursors, angiogenesis and kidney formation. In adults, participates in wound healing as well as organ regeneration and tissue remodeling. Also promotes differentiation and proliferation of hematopoietic cells. (Microbial infection) Acts as a receptor for Listeria monocytogenes internalin InlB, mediating entry of the pathogen into cells. In Canis lupus familiaris (Dog), this protein is Hepatocyte growth factor receptor (MET).